The primary structure comprises 293 residues: MRFSVFLPAIAALSSAVAAQRSCGSIPHKAFSNELKEAMENSRTSSFSNVTSNVTINTYFHVITDGNTGKISDETLQKQIAVLNSDYKASGFSFKLVASDSVDNPTWAAGEDDMGMKSALRKGGYDTLNVYFVPMLREGLLGFCYFPMKNPSEGQKIKDGCVINSNSVPGGSAQNYNEGKTTTHEVGHFMGLYHVFNEQEGNCQQDGDMIEDTPVQGSASSGCPTGKDSCPQQGVDSIHNYMDYSYDSCLTEFSPGQIKRMQMLWQFRAGSGSGSVTRPRPKPPVLMDYEHRL.

The first 19 residues, 1 to 19 (MRFSVFLPAIAALSSAVAA), serve as a signal peptide directing secretion. N-linked (GlcNAc...) asparagine glycosylation is found at N49 and N53. H184 contacts Zn(2+). Residue E185 is part of the active site. H188 lines the Zn(2+) pocket. C223 and C249 form a disulfide bridge. The tract at residues 270–293 (GSGSGSVTRPRPKPPVLMDYEHRL) is disordered.

Belongs to the peptidase M43B family.

The protein resides in the secreted. Secreted metalloproteinase that allows assimilation of proteinaceous substrates. Plays a pivotal role as a pathogenicity determinant during infections and contributes to the ability of the pathogen to persist within the mammalian host. The chain is Extracellular metalloprotease MGYG_00389 from Arthroderma gypseum (strain ATCC MYA-4604 / CBS 118893) (Microsporum gypseum).